Reading from the N-terminus, the 370-residue chain is Allatostatins (370 aa).

The signal sequence occupies residues 1–27 (MSGPRTCFCLPSALVLVLLSLSTSALG). A propeptide spanning residues 28 to 65 (TAPEPSGVHEESPAGGGTDLLPHPEDLSASDNPDLEFV) is cleaved from the precursor. The disordered stretch occupies residues 29–58 (APEPSGVHEESPAGGGTDLLPHPEDLSASD). Residues Leu-73, Leu-94, Leu-105, and Leu-117 each carry the leucine amide modification. Positions 121–151 (DYDYYGEEDEDDQQAIGDEDIEESDVGDLMD) are excised as a propeptide. Leu-161, Leu-172, Leu-188, Leu-200, Leu-213, and Leu-232 each carry leucine amide. A propeptide spanning residues 236–251 (SDDIDFRELEEKFAED) is cleaved from the precursor. Leucine amide is present on Leu-264. Residues 268–345 (EVEPSELEAV…ITPEEFSRMV (78 aa)) constitute a propeptide that is removed on maturation. The segment at 273 to 298 (ELEAVRNEEKDNSSVHDKKNNTNDMH) is disordered. Leu-353 is modified (leucine amide). Residue Ile-364 is modified to Isoleucine amide. The propeptide occupies 368–370 (SER).

The protein belongs to the allatostatin family. In terms of tissue distribution, brain, subesophageal ganglion and corpus allatum.

Its subcellular location is the secreted. In terms of biological role, neuropeptide inhibitors of juvenile hormone synthesis and gut muscle contraction. The polypeptide is Allatostatins (Diploptera punctata (Pacific beetle cockroach)).